Here is a 393-residue protein sequence, read N- to C-terminus: NAD(P)H-quinone oxidoreductase subunit H, chloroplastic (393 aa).

This sequence belongs to the complex I 49 kDa subunit family. As to quaternary structure, NDH is composed of at least 16 different subunits, 5 of which are encoded in the nucleus.

Its subcellular location is the plastid. The protein resides in the chloroplast thylakoid membrane. It carries out the reaction a plastoquinone + NADH + (n+1) H(+)(in) = a plastoquinol + NAD(+) + n H(+)(out). The enzyme catalyses a plastoquinone + NADPH + (n+1) H(+)(in) = a plastoquinol + NADP(+) + n H(+)(out). NDH shuttles electrons from NAD(P)H:plastoquinone, via FMN and iron-sulfur (Fe-S) centers, to quinones in the photosynthetic chain and possibly in a chloroplast respiratory chain. The immediate electron acceptor for the enzyme in this species is believed to be plastoquinone. Couples the redox reaction to proton translocation, and thus conserves the redox energy in a proton gradient. The chain is NAD(P)H-quinone oxidoreductase subunit H, chloroplastic from Cryptomeria japonica (Japanese cedar).